Consider the following 619-residue polypeptide: MKLITILFLCSRLLPSLTQESSQEIDCNDQDVFKAVDAALTKYNSENKSGNQFVLYRITEVARMDNPDTFYSLKYQIKEGDCPFQSNKTWQDCDYKDSAQAATGQCTATVAKRGNMKFSVAIQTCLITPAEGPVVTAQYECLGCVHPISTKSPDLEPVLRYAIQYFNNNTSHSHLFDLKEVKRAQKQVVSGWNYEVNYSIAQTNCSKEEFSFLTPDCKSLSSGDTGECTDKAHVDVKLRISSFSQKCDLYPGEDFLPPMVCVGCPKPIPVDSPDLEEALNHSIAKLNAEHDGTFYFKIDTVKKATVQVVGGLKYSIVFIARETTCSKGSNEELTKSCEINIHGQILHCDANVYVVPWEEKVYPTVNCQPLGQTSLMKRPPGFSPFRSVQVMKTEGSTTVSLPHSAMSPVQDEERDSGKEQGPTHGHGWDHGKQIKLHGLGLGHKHKHDQGHGHHRSHGLGHGHQKQHGLGHGHKHGHGHGKHKNKGKNNGKHYDWRTPYLASSYEDSTTSSAQTQEKTEETTLSSLAQPGVAITFPDFQDSDLIATVMPNTLPPHTESDDDWIPDIQTEPNSLAFKLISDFPETTSPKCPSRPWKPVNGVNPTVEMKESHDFDLVDALL.

An N-terminal signal peptide occupies residues 1–18; sequence MKLITILFLCSRLLPSLT. Q19 carries the pyrrolidone carboxylic acid modification. The region spanning 27–131 is the Cystatin kininogen-type 1 domain; it reads CNDQDVFKAV…IQTCLITPAE (105 aa). 9 disulfides stabilise this stretch: C27–C589, C82–C93, C106–C125, C141–C144, C205–C217, C228–C247, C261–C264, C325–C337, and C348–C367. The N-linked (GlcNAc...) asparagine glycan is linked to N87. An O-linked (GalNAc...) threonine; partial glycan is attached at T136. Residues 150-253 form the Cystatin kininogen-type 2 domain; that stretch reads TKSPDLEPVL…SQKCDLYPGE (104 aa). N168 and N169 each carry an N-linked (GlcNAc...) asparagine glycan. N197 carries an N-linked (GlcNAc...) asparagine; partial glycan. N204 is a glycosylation site (N-linked (GlcNAc...) asparagine). In terms of domain architecture, Cystatin kininogen-type 3 spans 270 to 373; it reads VDSPDLEEAL…TVNCQPLGQT (104 aa). N-linked (GlcNAc...) asparagine glycosylation occurs at N280. 4-hydroxyproline is present on P380. Residues 394–495 form a disordered region; the sequence is EGSTTVSLPH…GKNNGKHYDW (102 aa). O-linked (GalNAc...) serine glycosylation is present at S396. Residues T397 and T398 are each glycosylated (O-linked (GalNAc...) threonine). 2 O-linked (GalNAc...) serine glycosylation sites follow: S400 and S404. Positions 442-490 are enriched in basic residues; the sequence is GHKHKHDQGHGHHRSHGLGHGHQKQHGLGHGHKHGHGHGKHKNKGKNNG. An O-linked (GalNAc...) serine glycan is attached at S510. 6 O-linked (GalNAc...) threonine glycosylation sites follow: T518, T522, T534, T546, T551, and T568.

Bradykinin is released from kininogen by plasma kallikrein. As to expression, plasma.

It is found in the secreted. It localises to the extracellular space. Functionally, (1) Kininogens are inhibitors of thiol proteases; (2) HMW-kininogen plays an important role in blood coagulation by helping to position optimally prekallikrein and factor XI next to factor XII; (3) HMW-kininogen inhibits the thrombin- and plasmin-induced aggregation of thrombocytes; (4) the active peptide bradykinin that is released from HMW-kininogen shows a variety of physiological effects: (4A) influence in smooth muscle contraction, (4B) induction of hypotension, (4C) natriuresis and diuresis, (4D) decrease in blood glucose level, (4E) it is a mediator of inflammation and causes (4E1) increase in vascular permeability, (4E2) stimulation of nociceptors (4E3) release of other mediators of inflammation (e.g. prostaglandins), (4F) it has a cardioprotective effect (directly via bradykinin action, indirectly via endothelium-derived relaxing factor action); (5) LMW-kininogen inhibits the aggregation of thrombocytes; (6) LMW-kininogen is in contrast to HMW-kininogen not involved in blood clotting. The protein is Kininogen-2 (KNG2) of Bos taurus (Bovine).